The following is a 221-amino-acid chain: Peptide methionine sulfoxide reductase MsrA (221 aa).

Residue C54 is part of the active site.

This sequence belongs to the MsrA Met sulfoxide reductase family.

It carries out the reaction L-methionyl-[protein] + [thioredoxin]-disulfide + H2O = L-methionyl-(S)-S-oxide-[protein] + [thioredoxin]-dithiol. It catalyses the reaction [thioredoxin]-disulfide + L-methionine + H2O = L-methionine (S)-S-oxide + [thioredoxin]-dithiol. In terms of biological role, has an important function as a repair enzyme for proteins that have been inactivated by oxidation. Catalyzes the reversible oxidation-reduction of methionine sulfoxide in proteins to methionine. This Methylobacterium sp. (strain 4-46) protein is Peptide methionine sulfoxide reductase MsrA.